The following is a 303-amino-acid chain: MHIIMKTILATLCLILCASCCSKGACETRIKHTFSEKKFQKYSPVPKHPLSEQTHLYAKSCSIELEQTQLPTSTLTRYVSSTPTDSLSSKPLAAVYVLSHPLIQHKASLLRNKNTKSKIFRECLKEISLGVCYEATRDLALKNISIQTPLMQAECPHLTGTKIVVIPVLRAGLGMVDGFLALVPNAKVGLIGMSRNHETFQPSSYCCKLPEDIADCHVFIVDPMLATGGSASATIQLVKEHGAKNITLLNVLAVPEGIERIQKDHPDVTIYVASLDEKLNESAYILPGLGDAGDRLCGTSNPS.

A unknown region spans residues 1 to 86; that stretch reads MHIIMKTILA…RYVSSTPTDS (86 aa). Residues 87-303 are UPRTase; it reads LSSKPLAAVY…DRLCGTSNPS (217 aa). Residues Arg170, Arg195, and 222 to 230 contribute to the 5-phospho-alpha-D-ribose 1-diphosphate site; that span reads DPMLATGGS. Uracil-binding positions include Ile285 and 290-292; that span reads GDA. Position 291 (Asp291) interacts with 5-phospho-alpha-D-ribose 1-diphosphate.

The protein belongs to the UPRTase family. Mg(2+) serves as cofactor.

The catalysed reaction is UMP + diphosphate = 5-phospho-alpha-D-ribose 1-diphosphate + uracil. It participates in pyrimidine metabolism; UMP biosynthesis via salvage pathway; UMP from uracil: step 1/1. With respect to regulation, allosterically activated by GTP. Its function is as follows. Catalyzes the conversion of uracil and 5-phospho-alpha-D-ribose 1-diphosphate (PRPP) to UMP and diphosphate. The chain is Uracil phosphoribosyltransferase (upp) from Chlamydia muridarum (strain MoPn / Nigg).